A 218-amino-acid polypeptide reads, in one-letter code: Phosphatidylserine decarboxylase proenzyme (218 aa).

Residue serine 188 is the Schiff-base intermediate with substrate; via pyruvic acid of the active site. Serine 188 carries the pyruvic acid (Ser); by autocatalysis modification.

It belongs to the phosphatidylserine decarboxylase family. PSD-A subfamily. Heterodimer of a large membrane-associated beta subunit and a small pyruvoyl-containing alpha subunit. Requires pyruvate as cofactor. Is synthesized initially as an inactive proenzyme. Formation of the active enzyme involves a self-maturation process in which the active site pyruvoyl group is generated from an internal serine residue via an autocatalytic post-translational modification. Two non-identical subunits are generated from the proenzyme in this reaction, and the pyruvate is formed at the N-terminus of the alpha chain, which is derived from the carboxyl end of the proenzyme. The post-translation cleavage follows an unusual pathway, termed non-hydrolytic serinolysis, in which the side chain hydroxyl group of the serine supplies its oxygen atom to form the C-terminus of the beta chain, while the remainder of the serine residue undergoes an oxidative deamination to produce ammonia and the pyruvoyl prosthetic group on the alpha chain.

The protein resides in the cell membrane. The enzyme catalyses a 1,2-diacyl-sn-glycero-3-phospho-L-serine + H(+) = a 1,2-diacyl-sn-glycero-3-phosphoethanolamine + CO2. It functions in the pathway phospholipid metabolism; phosphatidylethanolamine biosynthesis; phosphatidylethanolamine from CDP-diacylglycerol: step 2/2. In terms of biological role, catalyzes the formation of phosphatidylethanolamine (PtdEtn) from phosphatidylserine (PtdSer). This is Phosphatidylserine decarboxylase proenzyme from Streptomyces coelicolor (strain ATCC BAA-471 / A3(2) / M145).